Here is an 835-residue protein sequence, read N- to C-terminus: Protein VP3 (835 aa).

Positions 171–245 (KKIKERMTTS…KDTIKLKQER (75 aa)) are N7-methyltransferase activity. The interval 246-428 (WLGKRLSQFD…KNIKRFIPKG (183 aa)) is 2'-O-methyltransferase activity. Residues 429 to 555 (VLYSYINNII…NHLFMLSGTN (127 aa)) form an N7-methyltransferase activity region. The GTase/RTPase activity stretch occupies residues 556 to 692 (KYFNMDQFAN…NYINKVYSIT (137 aa)). A 2'-5'-phosphodiesterase activity region spans residues 693-835 (YADDPNYFIG…KGDTVFDMAE (143 aa)). Residues H718, T720, H797, and T799 each act as for 2'-5'-phosphodiesterase activity in the active site.

Belongs to the rotavirus VP3 family. As to quaternary structure, interacts with VP1. Interacts with VP2.

Its subcellular location is the virion. It carries out the reaction a 5'-end diphospho-ribonucleoside in mRNA + GTP + H(+) = a 5'-end (5'-triphosphoguanosine)-ribonucleoside in mRNA + diphosphate. The catalysed reaction is a 5'-end (5'-triphosphoguanosine)-ribonucleoside in mRNA + S-adenosyl-L-methionine = a 5'-end (N(7)-methyl 5'-triphosphoguanosine)-ribonucleoside in mRNA + S-adenosyl-L-homocysteine. The enzyme catalyses 5'-triphosphoadenylyl-(2'-&gt;5')-adenylyl-(2'-&gt;5')-adenosine + 2 H2O = 2 AMP + ATP + 2 H(+). Functionally, multifunctional enzyme involved in mRNA capping. Catalyzes the formation of the 5' cap structure on the viral plus-strand transcripts. Specifically binds to GTP and displays guanylyltransferase and methyltransferase activities. Has affinity for ssRNA but not for dsRNA. Capping activity is non-specific and caps RNAs that initiate with either a G or an A residue. Together with VP1 polymerase, forms a VP1-VP3 complex positioned near the channels situated at each of the five-fold vertices of the core. Following infection, the outermost layer of the virus is lost, leaving a double-layered particle (DLP) made up of the core and VP6 shell. VP1 then catalyzes the transcription of fully conservative plus-strand genomic RNAs that are capped by VP3 and extruded through the DLP's channels into the cytoplasm where they function as mRNAs for translation of viral proteins. DLPs probably have an RNA triphosphatase activity as well, whereas open cores do not. Counteracts the host innate immune response thanks to its phosphodiesterase that degrades the 5'-triphosphorylated, 2'-5' linked adenylate oligomers produced by the host cell IFN-inducible 2',5'-oligoadenylate synthetase (OAS). The host RNaseL is therefore not activated. In Rotavirus A (strain RVA/Cow/United Kingdom/UK/1975/G6P7[5]) (RV-A), this protein is Protein VP3.